Reading from the N-terminus, the 75-residue chain is Small ribosomal subunit protein eS17 (75 aa).

This sequence belongs to the eukaryotic ribosomal protein eS17 family.

The sequence is that of Small ribosomal subunit protein eS17 from Thermoplasma volcanium (strain ATCC 51530 / DSM 4299 / JCM 9571 / NBRC 15438 / GSS1).